We begin with the raw amino-acid sequence, 952 residues long: RNA polymerase-associated protein RapA (952 aa).

Positions 164-334 (EVGRRYAPRV…FARLRLLDPD (171 aa)) constitute a Helicase ATP-binding domain. 177–184 (DEVGLGKT) is a binding site for ATP. The short motif at 280-283 (DEAH) is the DEAH box element. The region spanning 492–668 (RVNWLLELLK…GKSDGLESLI (177 aa)) is the Helicase C-terminal domain.

The protein belongs to the SNF2/RAD54 helicase family. RapA subfamily. Interacts with the RNAP. Has a higher affinity for the core RNAP than for the holoenzyme. Its ATPase activity is stimulated by binding to RNAP.

Functionally, transcription regulator that activates transcription by stimulating RNA polymerase (RNAP) recycling in case of stress conditions such as supercoiled DNA or high salt concentrations. Probably acts by releasing the RNAP, when it is trapped or immobilized on tightly supercoiled DNA. Does not activate transcription on linear DNA. Probably not involved in DNA repair. The chain is RNA polymerase-associated protein RapA from Aliivibrio fischeri (strain ATCC 700601 / ES114) (Vibrio fischeri).